The chain runs to 224 residues: Outer envelope pore protein 24, chloroplastic (224 aa).

A topological domain (cytoplasmic) is located at residue methionine 1. The beta stranded transmembrane segment at 2 to 11 threads the bilayer; sequence KATVKGRYEG. The Chloroplast intermembrane segment spans residues 12 to 16; the sequence is DKATA. Residues 17–28 traverse the membrane as a beta stranded segment; the sequence is AATLAFTPSAAD. The Cytoplasmic portion of the chain corresponds to 29–32; that stretch reads LRFK. Residues 33–42 traverse the membrane as a beta stranded segment; sequence ASATDAAFAR. At 43–55 the chain is on the chloroplast intermembrane side; it reads GPSLEGLILTLEK. The beta stranded transmembrane segment at 56-64 threads the bilayer; sequence PGSFLLDLK. Topologically, residues 65–70 are cytoplasmic; that stretch reads PHSKDV. A beta stranded membrane pass occupies residues 71-80; that stretch reads RFQFMNSALL. The Chloroplast intermembrane portion of the chain corresponds to 81-101; sequence LDRRVSLTYTHSTTLSPGPAK. Residues 102–111 traverse the membrane as a beta stranded segment; the sequence is LPARTALDGS. Residues 112–116 are Cytoplasmic-facing; it reads LTFDP. A beta stranded membrane pass occupies residues 117–126; it reads ANKLSLSHTL. The Chloroplast intermembrane segment spans residues 127-130; the sequence is GSSG. A beta stranded membrane pass occupies residues 131–140; the sequence is CRVKYSYAHG. The Cytoplasmic portion of the chain corresponds to 141-154; the sequence is QDRLTTIEPCFDTA. A beta stranded membrane pass occupies residues 155–166; that stretch reads NNAWDFAVTRKF. The Chloroplast intermembrane portion of the chain corresponds to 167–169; the sequence is QGG. Residues 170–178 traverse the membrane as a beta stranded segment; the sequence is DAIKATYQA. Residues 179–180 lie on the Cytoplasmic side of the membrane; that stretch reads ST. A beta stranded transmembrane segment spans residues 181-189; it reads KLLALDWTR. Residues 190 to 212 are Chloroplast intermembrane-facing; the sequence is DSKIGASFKVAASFDLSDQSKAP. Residues 213-222 form a beta stranded membrane-spanning segment; the sequence is KLIAESTWNY. The Cytoplasmic segment spans residues 223–224; that stretch reads EI.

Belongs to the plastid outer envelope porin OEP24 (TC 1.B.28.1) family. In terms of assembly, homooligomers form large rather nonselective pores in plastidial outer membranes.

The protein resides in the plastid. It is found in the etioplast membrane. Its subcellular location is the chloroplast outer membrane. Functionally, high-conductance voltage-dependent solute channel with a slight selectivity for cations transporting triosephosphates, dicarboxylic acids, ATP, inorganic phosphate (Pi), sugars, and positively or negatively charged amino acids. This Oryza sativa subsp. japonica (Rice) protein is Outer envelope pore protein 24, chloroplastic (OEP24).